The chain runs to 128 residues: MQKLLLALIVGLGGFLGASLRYLISIFAAKNFGGNFPYGTLIANILGALLIGFIMEFSMDSALISSNMKLFLTTGIMGGLTTFSTFSYETISMLTNGNMTLGIENIILNLGCSLLFVVIGQKLARILF.

Transmembrane regions (helical) follow at residues 4–24, 39–59, 71–91, and 99–119; these read LLLA…RYLI, GTLI…EFSM, FLTT…YETI, and MTLG…FVVI. Na(+) contacts are provided by Gly78 and Thr81.

The protein belongs to the fluoride channel Fluc/FEX (TC 1.A.43) family.

The protein localises to the cell membrane. It catalyses the reaction fluoride(in) = fluoride(out). Na(+) is not transported, but it plays an essential structural role and its presence is essential for fluoride channel function. Fluoride-specific ion channel. Important for reducing fluoride concentration in the cell, thus reducing its toxicity. In Clostridium perfringens (strain 13 / Type A), this protein is Fluoride-specific ion channel FluC.